A 244-amino-acid chain; its full sequence is Uridylate kinase (244 aa).

16–19 (KLSG) lines the ATP pocket. Gly58 is a binding site for UMP. 2 residues coordinate ATP: Gly59 and Arg63. Residues Asp78 and 139-146 (VGAPYFTT) contribute to the UMP site. Residues Thr166, Tyr172, and Asp175 each contribute to the ATP site.

This sequence belongs to the UMP kinase family. As to quaternary structure, homohexamer.

The protein localises to the cytoplasm. The catalysed reaction is UMP + ATP = UDP + ADP. It functions in the pathway pyrimidine metabolism; CTP biosynthesis via de novo pathway; UDP from UMP (UMPK route): step 1/1. With respect to regulation, inhibited by UTP. In terms of biological role, catalyzes the reversible phosphorylation of UMP to UDP. In Novosphingobium aromaticivorans (strain ATCC 700278 / DSM 12444 / CCUG 56034 / CIP 105152 / NBRC 16084 / F199), this protein is Uridylate kinase.